Reading from the N-terminus, the 120-residue chain is ATP-dependent Clp protease adapter protein ClpS (120 aa).

It belongs to the ClpS family. Binds to the N-terminal domain of the chaperone ClpA.

Its function is as follows. Involved in the modulation of the specificity of the ClpAP-mediated ATP-dependent protein degradation. The polypeptide is ATP-dependent Clp protease adapter protein ClpS (Pseudomonas syringae pv. syringae (strain B728a)).